Here is a 504-residue protein sequence, read N- to C-terminus: Aspartyl/glutamyl-tRNA(Asn/Gln) amidotransferase subunit B (504 aa).

This sequence belongs to the GatB/GatE family. GatB subfamily. In terms of assembly, heterotrimer of A, B and C subunits.

It catalyses the reaction L-glutamyl-tRNA(Gln) + L-glutamine + ATP + H2O = L-glutaminyl-tRNA(Gln) + L-glutamate + ADP + phosphate + H(+). The catalysed reaction is L-aspartyl-tRNA(Asn) + L-glutamine + ATP + H2O = L-asparaginyl-tRNA(Asn) + L-glutamate + ADP + phosphate + 2 H(+). In terms of biological role, allows the formation of correctly charged Asn-tRNA(Asn) or Gln-tRNA(Gln) through the transamidation of misacylated Asp-tRNA(Asn) or Glu-tRNA(Gln) in organisms which lack either or both of asparaginyl-tRNA or glutaminyl-tRNA synthetases. The reaction takes place in the presence of glutamine and ATP through an activated phospho-Asp-tRNA(Asn) or phospho-Glu-tRNA(Gln). The sequence is that of Aspartyl/glutamyl-tRNA(Asn/Gln) amidotransferase subunit B from Tropheryma whipplei (strain Twist) (Whipple's bacillus).